A 150-amino-acid polypeptide reads, in one-letter code: Arginine repressor (150 aa).

The protein belongs to the ArgR family.

The protein localises to the cytoplasm. It participates in amino-acid biosynthesis; L-arginine biosynthesis [regulation]. Functionally, regulates arginine biosynthesis genes. This is Arginine repressor from Clostridium kluyveri (strain NBRC 12016).